The sequence spans 312 residues: Transcription initiation factor IIB (312 aa).

The TFIIB-type zinc-finger motif lies at 10-42 (FVQTCSDCGETQNIVEDYKNGYHVCGRCGCIVG). Residues Cys-14, Cys-17, Cys-34, and Cys-37 each contribute to the Zn(2+) site. 2 consecutive repeat copies span residues 120-196 (FCER…LISP) and 213-290 (FCSD…ELLT).

It belongs to the TFIIB family. In terms of assembly, associates with TFIID-IIA (DA complex) to form TFIID-IIA-IIB (DAB-complex) which is then recognized by polymerase II.

The protein localises to the nucleus. Its function is as follows. General factor that plays a major role in the activation of eukaryotic genes transcribed by RNA polymerase II. This Encephalitozoon cuniculi (strain GB-M1) (Microsporidian parasite) protein is Transcription initiation factor IIB.